Here is a 260-residue protein sequence, read N- to C-terminus: (R)-2-hydroxyglutaryl-CoA dehydratase activating ATPase (260 aa).

Position 12–16 (12–16 (STASK)) interacts with ATP. Residues C127 and C166 each contribute to the [4Fe-4S] cluster site. Residues Q220 and Q243 each coordinate ATP.

Belongs to the HgdC family. As to quaternary structure, homodimer. [4Fe-4S] cluster is required as a cofactor. It depends on Mg(2+) as a cofactor.

It carries out the reaction ATP + H2O = ADP + phosphate + H(+). The protein operates within amino-acid degradation; L-glutamate degradation via hydroxyglutarate pathway; crotonoyl-CoA from L-glutamate: step 4/5. With respect to regulation, inactivated by exposure to air within less than 15 minutes. Its function is as follows. Involved in the fermentation of L-glutamate via the hydroxyglutarate pathway. HgdC (CompA) has a very low ATPase activity, whose the role is to activate dehydratase HgdA-HgdB complex and then maintain an appropriate redox state via an ATP-dependent electron transfer. The dehydratase requires only catalytic amounts of ATP and substoichiometric amounts of HgdC (CompA) to be functional. The polypeptide is (R)-2-hydroxyglutaryl-CoA dehydratase activating ATPase (Acidaminococcus fermentans (strain ATCC 25085 / DSM 20731 / CCUG 9996 / CIP 106432 / VR4)).